The primary structure comprises 165 residues: UPF0303 protein BTH_I2506 (165 aa).

This sequence belongs to the UPF0303 family.

The chain is UPF0303 protein BTH_I2506 from Burkholderia thailandensis (strain ATCC 700388 / DSM 13276 / CCUG 48851 / CIP 106301 / E264).